Reading from the N-terminus, the 146-residue chain is Hemoglobin subunit beta-1 (146 aa).

The region spanning 2 to 146 is the Globin domain; the sequence is HWTAEEKQLI…VSHSLARRYH (145 aa). H63 and H92 together coordinate heme b.

This sequence belongs to the globin family. As to quaternary structure, the major hemoglobin component (HbIII) is a tetramer of two alpha-2 chains and two beta-1 chains. As to expression, red blood cells.

Involved in oxygen transport from the lung to the various peripheral tissues. This chain is Hemoglobin subunit beta-1 (HBB1), found in Varanus albigularis (White-throated monitor).